The sequence spans 380 residues: Succinyl-diaminopimelate desuccinylase (380 aa).

His71 is a Zn(2+) binding site. Residue Asp73 is part of the active site. A Zn(2+)-binding site is contributed by Asp104. Glu136 (proton acceptor) is an active-site residue. Zn(2+) is bound by residues Glu137, Glu166, and His351.

This sequence belongs to the peptidase M20A family. DapE subfamily. In terms of assembly, homodimer. It depends on Zn(2+) as a cofactor. Co(2+) serves as cofactor.

The enzyme catalyses N-succinyl-(2S,6S)-2,6-diaminopimelate + H2O = (2S,6S)-2,6-diaminopimelate + succinate. The protein operates within amino-acid biosynthesis; L-lysine biosynthesis via DAP pathway; LL-2,6-diaminopimelate from (S)-tetrahydrodipicolinate (succinylase route): step 3/3. Functionally, catalyzes the hydrolysis of N-succinyl-L,L-diaminopimelic acid (SDAP), forming succinate and LL-2,6-diaminopimelate (DAP), an intermediate involved in the bacterial biosynthesis of lysine and meso-diaminopimelic acid, an essential component of bacterial cell walls. This Ehrlichia canis (strain Jake) protein is Succinyl-diaminopimelate desuccinylase.